Here is a 327-residue protein sequence, read N- to C-terminus: uncharacterized protein (327 aa).

The region spanning 32–105 (VRLDKWLAEQ…IPLDILYEDE (74 aa)) is the S4 RNA-binding domain. D156 is an active-site residue.

It belongs to the pseudouridine synthase RluA family.

The enzyme catalyses a uridine in RNA = a pseudouridine in RNA. This is an uncharacterized protein from Synechocystis sp. (strain ATCC 27184 / PCC 6803 / Kazusa).